We begin with the raw amino-acid sequence, 282 residues long: Bifunctional protein FolD (282 aa).

Residues 164–166 (GRS) and Ser-189 each bind NADP(+).

This sequence belongs to the tetrahydrofolate dehydrogenase/cyclohydrolase family. Homodimer.

The enzyme catalyses (6R)-5,10-methylene-5,6,7,8-tetrahydrofolate + NADP(+) = (6R)-5,10-methenyltetrahydrofolate + NADPH. The catalysed reaction is (6R)-5,10-methenyltetrahydrofolate + H2O = (6R)-10-formyltetrahydrofolate + H(+). Its pathway is one-carbon metabolism; tetrahydrofolate interconversion. Functionally, catalyzes the oxidation of 5,10-methylenetetrahydrofolate to 5,10-methenyltetrahydrofolate and then the hydrolysis of 5,10-methenyltetrahydrofolate to 10-formyltetrahydrofolate. The chain is Bifunctional protein FolD from Lachnoclostridium phytofermentans (strain ATCC 700394 / DSM 18823 / ISDg) (Clostridium phytofermentans).